The primary structure comprises 87 residues: Homeotic protein ultrabithorax (87 aa).

Residues 22 to 27 carry the Antp-type hexapeptide motif; sequence FYPWMA.

The protein belongs to the Antp homeobox family. As to expression, in the embryo, expression is seen in the epidermis, somatic and visceral mesoderm, and the peripheral and central nervous system.

The protein resides in the nucleus. Its function is as follows. Sequence-specific transcription factor which is part of a developmental regulatory system that provides cells with specific positional identities on the anterior-posterior axis. Binds the consensus region 5'-TTAAT[GT][GA]-3'. This homeotic protein controls development of the cells in the posterior thoracic and first abdominal segments. It activates the synthesis of the decapentaplegic (DPP) growth factor. This Drosophila hydei (Fruit fly) protein is Homeotic protein ultrabithorax (Ubx).